The chain runs to 818 residues: Histone H2A deubiquitinase MYSM1 (818 aa).

Residues 107–158 form the SANT domain; that stretch reads SSPVKWTKEEKNLFEQGLATFGRRWTSIARLIGSRSVLQVKNYARHYFKNKC. In terms of domain architecture, SWIRM spans 344 to 442; that stretch reads IKPPDQELEI…FGCEQAIYNR (99 aa). An MPN domain is found at 548–680; the sequence is VKVSCEAMLV…PHPQSQVACL (133 aa). Residues His627, His629, and Asp640 each contribute to the Zn(2+) site. A JAMM motif motif is present at residues 627–640; that stretch reads HSHPAFDPNPSIRD. The LXXLL motif motif lies at 745–749; the sequence is LQKLL.

Belongs to the peptidase M67A family. MYSM1 subfamily.

Its subcellular location is the nucleus. Metalloprotease that specifically deubiquitinates monoubiquitinated histone H2A, a specific tag for epigenetic transcriptional repression, thereby acting as a coactivator. Preferentially deubiquitinates monoubiquitinated H2A in hyperacetylated nucleosomes. Deubiquitination of histone H2A leads to facilitate the phosphorylation and dissociation of histone H1 from the nucleosome. Acts as a coactivator by participating in the initiation and elongation steps of androgen receptor (AR)-induced gene activation. This is Histone H2A deubiquitinase MYSM1 (mysm1) from Xenopus laevis (African clawed frog).